A 41-amino-acid chain; its full sequence is Photosystem I reaction center subunit IX (41 aa).

A helical membrane pass occupies residues 7-27; the sequence is YLSSAPILATIWFAITAGILI.

Belongs to the PsaJ family.

The protein resides in the cellular thylakoid membrane. Its function is as follows. May help in the organization of the PsaE and PsaF subunits. The protein is Photosystem I reaction center subunit IX of Synechococcus sp. (strain ATCC 27144 / PCC 6301 / SAUG 1402/1) (Anacystis nidulans).